Reading from the N-terminus, the 278-residue chain is Rhomboid protease GlpG (278 aa).

6 helical membrane-spanning segments follow: residues 94–114 (AGPL…LMLI), 143–163 (AFLH…WYLG), 175–195 (LLVL…LFSG), 196–216 (ANFG…WLTG), 224–241 (ISLP…LIAG), and 245–267 (ILGL…LMAF). The active-site Nucleophile is the serine 202. Histidine 255 is a catalytic residue.

Belongs to the peptidase S54 family.

The protein localises to the cell inner membrane. The enzyme catalyses Cleaves type-1 transmembrane domains using a catalytic dyad composed of serine and histidine that are contributed by different transmembrane domains.. Rhomboid-type serine protease that catalyzes intramembrane proteolysis. The chain is Rhomboid protease GlpG from Yersinia pestis bv. Antiqua (strain Antiqua).